The chain runs to 430 residues: Tryptophan synthase beta chain (430 aa).

Lysine 95 is modified (N6-(pyridoxal phosphate)lysine).

This sequence belongs to the TrpB family. In terms of assembly, tetramer of two alpha and two beta chains. Pyridoxal 5'-phosphate serves as cofactor.

It carries out the reaction (1S,2R)-1-C-(indol-3-yl)glycerol 3-phosphate + L-serine = D-glyceraldehyde 3-phosphate + L-tryptophan + H2O. The protein operates within amino-acid biosynthesis; L-tryptophan biosynthesis; L-tryptophan from chorismate: step 5/5. In terms of biological role, the beta subunit is responsible for the synthesis of L-tryptophan from indole and L-serine. The protein is Tryptophan synthase beta chain of Halobacterium salinarum (strain ATCC 29341 / DSM 671 / R1).